The sequence spans 153 residues: Ribosome maturation factor RimP (153 aa).

The protein belongs to the RimP family.

The protein resides in the cytoplasm. In terms of biological role, required for maturation of 30S ribosomal subunits. This chain is Ribosome maturation factor RimP, found in Clostridium botulinum (strain Langeland / NCTC 10281 / Type F).